A 330-amino-acid polypeptide reads, in one-letter code: ADP-L-glycero-D-manno-heptose-6-epimerase (330 aa).

NADP(+) contacts are provided by residues phenylalanine 11–isoleucine 12, aspartate 32–aspartate 33, glutamine 39, glutamine 54, glutamine 75–alanine 79, and asparagine 92. The active-site Proton acceptor is tyrosine 139. Residue lysine 143 coordinates NADP(+). Asparagine 168 contacts substrate. Positions 169 and 177 each coordinate NADP(+). Lysine 177 serves as the catalytic Proton acceptor. Residues arginine 179, histidine 186, phenylalanine 200–histidine 203, arginine 213, and tyrosine 292 contribute to the substrate site.

The protein belongs to the NAD(P)-dependent epimerase/dehydratase family. HldD subfamily. Homopentamer. The cofactor is NADP(+).

The enzyme catalyses ADP-D-glycero-beta-D-manno-heptose = ADP-L-glycero-beta-D-manno-heptose. It functions in the pathway nucleotide-sugar biosynthesis; ADP-L-glycero-beta-D-manno-heptose biosynthesis; ADP-L-glycero-beta-D-manno-heptose from D-glycero-beta-D-manno-heptose 7-phosphate: step 4/4. Its function is as follows. Catalyzes the interconversion between ADP-D-glycero-beta-D-manno-heptose and ADP-L-glycero-beta-D-manno-heptose via an epimerization at carbon 6 of the heptose. The sequence is that of ADP-L-glycero-D-manno-heptose-6-epimerase from Pseudomonas aeruginosa (strain UCBPP-PA14).